The sequence spans 107 residues: Serine-rich and transmembrane domain-containing protein 1 (107 aa).

A helical membrane pass occupies residues 43–63 (IYVSIFLSLLAFLLLLLIIAL).

Its subcellular location is the membrane. In Mus musculus (Mouse), this protein is Serine-rich and transmembrane domain-containing protein 1 (Sertm1).